Here is a 235-residue protein sequence, read N- to C-terminus: dITP/XTP pyrophosphatase (235 aa).

7 to 12 (STNPGK) contacts substrate. The active-site Proton acceptor is the Asp70. Asp70 is a Mg(2+) binding site. Substrate contacts are provided by residues Ser71, 180–183 (FGYD), Lys211, and 216–217 (HR).

It belongs to the HAM1 NTPase family. As to quaternary structure, homodimer. Mg(2+) serves as cofactor.

It carries out the reaction XTP + H2O = XMP + diphosphate + H(+). The enzyme catalyses dITP + H2O = dIMP + diphosphate + H(+). It catalyses the reaction ITP + H2O = IMP + diphosphate + H(+). Pyrophosphatase that catalyzes the hydrolysis of nucleoside triphosphates to their monophosphate derivatives, with a high preference for the non-canonical purine nucleotides XTP (xanthosine triphosphate), dITP (deoxyinosine triphosphate) and ITP. Seems to function as a house-cleaning enzyme that removes non-canonical purine nucleotides from the nucleotide pool, thus preventing their incorporation into DNA/RNA and avoiding chromosomal lesions. The sequence is that of dITP/XTP pyrophosphatase from Anaeromyxobacter dehalogenans (strain 2CP-C).